A 260-amino-acid polypeptide reads, in one-letter code: Indole-3-glycerol phosphate synthase (260 aa).

The protein belongs to the TrpC family.

The enzyme catalyses 1-(2-carboxyphenylamino)-1-deoxy-D-ribulose 5-phosphate + H(+) = (1S,2R)-1-C-(indol-3-yl)glycerol 3-phosphate + CO2 + H2O. The protein operates within amino-acid biosynthesis; L-tryptophan biosynthesis; L-tryptophan from chorismate: step 4/5. The polypeptide is Indole-3-glycerol phosphate synthase (Staphylococcus aureus (strain bovine RF122 / ET3-1)).